A 190-amino-acid chain; its full sequence is Vascular endothelial growth factor A (190 aa).

Positions 1 to 26 (MNFLLSWVHWSLALLLYLHHAKWSQA) are cleaved as a signal peptide. 3 disulfide bridges follow: cysteine 51–cysteine 93, cysteine 82–cysteine 127, and cysteine 86–cysteine 129. Residue asparagine 100 is glycosylated (N-linked (GlcNAc...) asparagine).

It belongs to the PDGF/VEGF growth factor family. Homodimer; disulfide-linked. Also found as heterodimer with PGF. Interacts with NRP1. Interacts with isoform 2 of BSG. Interacts with CD82; this interaction inhibits VEGFA-mediated signaling pathway.

Its subcellular location is the secreted. Functionally, growth factor active in angiogenesis, vasculogenesis and endothelial cell growth. Induces endothelial cell proliferation, promotes cell migration, inhibits apoptosis and induces permeabilization of blood vessels. Binds to the FLT1/VEGFR1 and KDR/VEGFR2 receptors, heparan sulfate and heparin. Binding to NRP1 receptor initiates a signaling pathway needed for motor neuron axon guidance and cell body migration, including for the caudal migration of facial motor neurons from rhombomere 4 to rhombomere 6 during embryonic development. Also binds the DEAR/FBXW7-AS1 receptor. This is Vascular endothelial growth factor A (VEGFA) from Equus caballus (Horse).